Consider the following 159-residue polypeptide: Small ribosomal subunit protein uS5c (159 aa).

Residues 17-80 (WEERVVSVQR…TDGKKNVITV (64 aa)) form the S5 DRBM domain.

This sequence belongs to the universal ribosomal protein uS5 family. As to quaternary structure, part of the 30S ribosomal subunit. Contacts protein S4.

It is found in the plastid. It localises to the chloroplast. With S4 and S12 plays an important role in translational accuracy. The protein is Small ribosomal subunit protein uS5c (rps5) of Emiliania huxleyi (Coccolithophore).